An 89-amino-acid polypeptide reads, in one-letter code: Antitoxin RelB (89 aa).

This sequence belongs to the phD/YefM antitoxin family. As to quaternary structure, interacts with toxin RelE, which neutralizes its toxicity. Also interacts with toxins RelG and RelK in vitro, in M.smegmatis coexpression with non-cognate toxins neutralizes the toxicity of RelG while increasing the toxicity of RelK.

In terms of biological role, antitoxin component of a type II toxin-antitoxin (TA) system. Upon expression in M.smegmatis neutralizes the effect of toxin RelE. Its function is as follows. Induces its own promoter, in combination with RelE represses its own promoter. Binds DNA in complex with toxin RelE but not alone. This chain is Antitoxin RelB (relB), found in Mycobacterium tuberculosis (strain ATCC 25618 / H37Rv).